Here is a 432-residue protein sequence, read N- to C-terminus: Ribosomal protein uS12 methylthiotransferase RimO (432 aa).

The MTTase N-terminal domain maps to 4–122 (NTIDIITLGC…LLADLGKAYK (119 aa)). [4Fe-4S] cluster-binding residues include Cys-13, Cys-51, Cys-85, Cys-146, Cys-150, and Cys-153. The region spanning 132–363 (TTPHHYAYLK…MALQQEIAGE (232 aa)) is the Radical SAM core domain. The TRAM domain maps to 366–432 (QTKIGKEFKV…DDFDLYASIL (67 aa)).

The protein belongs to the methylthiotransferase family. RimO subfamily. [4Fe-4S] cluster serves as cofactor.

It is found in the cytoplasm. It catalyses the reaction L-aspartate(89)-[ribosomal protein uS12]-hydrogen + (sulfur carrier)-SH + AH2 + 2 S-adenosyl-L-methionine = 3-methylsulfanyl-L-aspartate(89)-[ribosomal protein uS12]-hydrogen + (sulfur carrier)-H + 5'-deoxyadenosine + L-methionine + A + S-adenosyl-L-homocysteine + 2 H(+). Catalyzes the methylthiolation of an aspartic acid residue of ribosomal protein uS12. The sequence is that of Ribosomal protein uS12 methylthiotransferase RimO from Phocaeicola vulgatus (strain ATCC 8482 / DSM 1447 / JCM 5826 / CCUG 4940 / NBRC 14291 / NCTC 11154) (Bacteroides vulgatus).